Reading from the N-terminus, the 553-residue chain is Adenine deaminase (553 aa).

It belongs to the metallo-dependent hydrolases superfamily. Adenine deaminase family. It depends on Mn(2+) as a cofactor.

It carries out the reaction adenine + H2O + H(+) = hypoxanthine + NH4(+). In Methanosarcina acetivorans (strain ATCC 35395 / DSM 2834 / JCM 12185 / C2A), this protein is Adenine deaminase.